Here is a 429-residue protein sequence, read N- to C-terminus: Histidine--tRNA ligase (429 aa).

Belongs to the class-II aminoacyl-tRNA synthetase family. As to quaternary structure, homodimer.

The protein resides in the cytoplasm. The enzyme catalyses tRNA(His) + L-histidine + ATP = L-histidyl-tRNA(His) + AMP + diphosphate + H(+). This is Histidine--tRNA ligase from Pseudomonas aeruginosa (strain LESB58).